We begin with the raw amino-acid sequence, 134 residues long: Translation initiation factor 2 subunit beta (134 aa).

This sequence belongs to the eIF-2-beta/eIF-5 family. Heterotrimer composed of an alpha, a beta and a gamma chain.

EIF-2 functions in the early steps of protein synthesis by forming a ternary complex with GTP and initiator tRNA. The polypeptide is Translation initiation factor 2 subunit beta (Pyrobaculum neutrophilum (strain DSM 2338 / JCM 9278 / NBRC 100436 / V24Sta) (Thermoproteus neutrophilus)).